Reading from the N-terminus, the 538-residue chain is Calcium-dependent protein kinase 3 (538 aa).

Residues 23–70 (PKKSIERIKKKKDSNKSIKSQHKFEGSKISNKNNELKDVKSKDPKNYE) are disordered. The segment covering 56 to 68 (NELKDVKSKDPKN) has biased composition (basic and acidic residues). Positions 112–367 (NLSEEPLGKG…ASEALKHPWF (256 aa)) constitute a Protein kinase domain. ATP contacts are provided by residues 118–126 (LGKGTYGCV) and Lys141. Asp232 (proton acceptor) is an active-site residue. Positions 387–395 (NFKNYALLL) match the J domain autoinhibitory motif motif. Residues 387-422 (NFKNYALLLKLQKLAMTIIAQQSNDYDLQQLKAVFL) form a j domain region. The J domain EF-hand interaction motif motif lies at 396 to 405 (KLQKLAMTII). 3 consecutive EF-hand domains span residues 412–447 (YDLQQLKAVFLYLDEDGKGNITKNQLKKGLENSGLK), 450–481 (QNFDVLLDQIDSDGSGRIDYTEFLAAALDRKH), and 482–517 (LSKKLIYCAFRVFDVDNDGEITTAELAHVTFFVILF). Ca(2+) is bound by residues Asp460, Asp462, Ser464, Arg466, Glu471, Asp495, Asp497, Asp499, Glu501, and Glu506.

The protein belongs to the protein kinase superfamily. Ser/Thr protein kinase family. CDPK subfamily. It depends on Mg(2+) as a cofactor.

The protein resides in the cytoplasm. The enzyme catalyses L-seryl-[protein] + ATP = O-phospho-L-seryl-[protein] + ADP + H(+). The catalysed reaction is L-threonyl-[protein] + ATP = O-phospho-L-threonyl-[protein] + ADP + H(+). Activated by calcium. Upon calcium binding to the EF-hand domain 2, the C-terminus of the junction domain (J domain) undergoes a conformational change which results in the dissociation of the pseudo-substrate inhibitory motif from the catalytic domain. This, in turn, may facilitate the autophosphorylation of the activation loop at Thr-273, which leads to the kinase activation. Calcium-dependent protein kinase which acts as a sensor and effector of intracellular Ca(2+) levels probably in part downstream of cGMP-activated PKG kinase. In the mosquito midgut, regulates the gliding motility of the ookinete which is essential for the ookinete to invade the midgut epithelium. However, another study showed that while required for ookinete invasion of the midgut epithelium, is not required for ookinete gliding motility. This chain is Calcium-dependent protein kinase 3, found in Plasmodium yoelii yoelii.